Consider the following 209-residue polypeptide: Histidine biosynthesis bifunctional protein HisIE (209 aa).

The tract at residues 1 to 123 (MEIEKLLEQV…VLPIDYSLSI (123 aa)) is phosphoribosyl-AMP cyclohydrolase. Residues 124-209 (LKELEEIIKR…VMNELRRRRK (86 aa)) form a phosphoribosyl-ATP pyrophosphohydrolase region.

The protein in the N-terminal section; belongs to the PRA-CH family. It in the C-terminal section; belongs to the PRA-PH family.

The protein resides in the cytoplasm. It carries out the reaction 1-(5-phospho-beta-D-ribosyl)-ATP + H2O = 1-(5-phospho-beta-D-ribosyl)-5'-AMP + diphosphate + H(+). The catalysed reaction is 1-(5-phospho-beta-D-ribosyl)-5'-AMP + H2O = 1-(5-phospho-beta-D-ribosyl)-5-[(5-phospho-beta-D-ribosylamino)methylideneamino]imidazole-4-carboxamide. The protein operates within amino-acid biosynthesis; L-histidine biosynthesis; L-histidine from 5-phospho-alpha-D-ribose 1-diphosphate: step 2/9. Its pathway is amino-acid biosynthesis; L-histidine biosynthesis; L-histidine from 5-phospho-alpha-D-ribose 1-diphosphate: step 3/9. The chain is Histidine biosynthesis bifunctional protein HisIE (hisI) from Pyrococcus furiosus (strain ATCC 43587 / DSM 3638 / JCM 8422 / Vc1).